Consider the following 93-residue polypeptide: DNA-directed RNA polymerase subunit Rpo11 (93 aa).

It belongs to the archaeal Rpo11/eukaryotic RPB11/RPC19 RNA polymerase subunit family. In terms of assembly, part of the RNA polymerase complex.

The protein localises to the cytoplasm. The enzyme catalyses RNA(n) + a ribonucleoside 5'-triphosphate = RNA(n+1) + diphosphate. Its function is as follows. DNA-dependent RNA polymerase (RNAP) catalyzes the transcription of DNA into RNA using the four ribonucleoside triphosphates as substrates. The sequence is that of DNA-directed RNA polymerase subunit Rpo11 from Sulfurisphaera tokodaii (strain DSM 16993 / JCM 10545 / NBRC 100140 / 7) (Sulfolobus tokodaii).